Here is a 426-residue protein sequence, read N- to C-terminus: Serine--tRNA ligase (426 aa).

233–235 (TAE) provides a ligand contact to L-serine. Residue 264 to 266 (RSE) coordinates ATP. Glu287 serves as a coordination point for L-serine. 351–354 (EISS) serves as a coordination point for ATP. Ser387 contributes to the L-serine binding site.

It belongs to the class-II aminoacyl-tRNA synthetase family. Type-1 seryl-tRNA synthetase subfamily. In terms of assembly, homodimer. The tRNA molecule binds across the dimer.

It localises to the cytoplasm. The catalysed reaction is tRNA(Ser) + L-serine + ATP = L-seryl-tRNA(Ser) + AMP + diphosphate + H(+). It carries out the reaction tRNA(Sec) + L-serine + ATP = L-seryl-tRNA(Sec) + AMP + diphosphate + H(+). Its pathway is aminoacyl-tRNA biosynthesis; selenocysteinyl-tRNA(Sec) biosynthesis; L-seryl-tRNA(Sec) from L-serine and tRNA(Sec): step 1/1. Functionally, catalyzes the attachment of serine to tRNA(Ser). Is also able to aminoacylate tRNA(Sec) with serine, to form the misacylated tRNA L-seryl-tRNA(Sec), which will be further converted into selenocysteinyl-tRNA(Sec). The polypeptide is Serine--tRNA ligase (Francisella philomiragia subsp. philomiragia (strain ATCC 25017 / CCUG 19701 / FSC 153 / O#319-036)).